Reading from the N-terminus, the 158-residue chain is Lipoprotein signal peptidase (158 aa).

Helical transmembrane passes span 7-27, 38-58, 67-87, and 95-115; these read LFWI…YWVV, ILPG…FSLF, WLSL…PVLE, and GLIL…GYVV. Catalysis depends on residues D116 and D132. The helical transmembrane segment at 125 to 145 threads the bilayer; sequence FAVFNMADSFISIGIVCLLLA.

The protein belongs to the peptidase A8 family.

The protein localises to the cell inner membrane. The catalysed reaction is Release of signal peptides from bacterial membrane prolipoproteins. Hydrolyzes -Xaa-Yaa-Zaa-|-(S,diacylglyceryl)Cys-, in which Xaa is hydrophobic (preferably Leu), and Yaa (Ala or Ser) and Zaa (Gly or Ala) have small, neutral side chains.. It participates in protein modification; lipoprotein biosynthesis (signal peptide cleavage). In terms of biological role, this protein specifically catalyzes the removal of signal peptides from prolipoproteins. In Trichormus variabilis (strain ATCC 29413 / PCC 7937) (Anabaena variabilis), this protein is Lipoprotein signal peptidase.